The following is a 1590-amino-acid chain: Pentafunctional AROM polypeptide (1590 aa).

The tract at residues Met1 to Asp400 is 3-dehydroquinate synthase. NAD(+) is bound by residues Asp49–Asn51, Glu96–Lys99, Gly127–Val129, and Asp132. Arg143 contributes to the 7-phospho-2-dehydro-3-deoxy-D-arabino-heptonate binding site. Thr152–Thr153 is an NAD(+) binding site. 7-phospho-2-dehydro-3-deoxy-D-arabino-heptonate-binding residues include Asp159 and Lys165. An NAD(+)-binding site is contributed by Lys174. Asn175 serves as a coordination point for 7-phospho-2-dehydro-3-deoxy-D-arabino-heptonate. Residues Phe192–Thr195 and Asn203 contribute to the NAD(+) site. Zn(2+) is bound at residue Glu207. Residues Glu207–Lys210 and Lys266 each bind 7-phospho-2-dehydro-3-deoxy-D-arabino-heptonate. Glu276 (proton acceptor; for 3-dehydroquinate synthase activity) is an active-site residue. 7-phospho-2-dehydro-3-deoxy-D-arabino-heptonate-binding positions include Arg280–Asn284 and His287. Residue His287 participates in Zn(2+) binding. His291 serves as the catalytic Proton acceptor; for 3-dehydroquinate synthase activity. Residues His303 and Lys372 each coordinate 7-phospho-2-dehydro-3-deoxy-D-arabino-heptonate. Residue His303 coordinates Zn(2+). The interval Val413–Val856 is EPSP synthase. Cys838 functions as the For EPSP synthase activity in the catalytic mechanism. Positions Asn876–Ser1070 are shikimate kinase. Gly883 to Ser890 lines the ATP pocket. The 3-dehydroquinase stretch occupies residues Leu1071 to Glu1285. His1187 acts as the Proton acceptor; for 3-dehydroquinate dehydratase activity in catalysis. Lys1215 serves as the catalytic Schiff-base intermediate with substrate; for 3-dehydroquinate dehydratase activity. The interval Lys1298–Ser1590 is shikimate dehydrogenase.

It in the N-terminal section; belongs to the sugar phosphate cyclases superfamily. Dehydroquinate synthase family. In the 2nd section; belongs to the EPSP synthase family. The protein in the 3rd section; belongs to the shikimate kinase family. This sequence in the 4th section; belongs to the type-I 3-dehydroquinase family. It in the C-terminal section; belongs to the shikimate dehydrogenase family. Homodimer. The cofactor is Zn(2+).

It is found in the cytoplasm. The enzyme catalyses 7-phospho-2-dehydro-3-deoxy-D-arabino-heptonate = 3-dehydroquinate + phosphate. The catalysed reaction is 3-dehydroquinate = 3-dehydroshikimate + H2O. It catalyses the reaction shikimate + NADP(+) = 3-dehydroshikimate + NADPH + H(+). It carries out the reaction shikimate + ATP = 3-phosphoshikimate + ADP + H(+). The enzyme catalyses 3-phosphoshikimate + phosphoenolpyruvate = 5-O-(1-carboxyvinyl)-3-phosphoshikimate + phosphate. The protein operates within metabolic intermediate biosynthesis; chorismate biosynthesis; chorismate from D-erythrose 4-phosphate and phosphoenolpyruvate: step 2/7. Its pathway is metabolic intermediate biosynthesis; chorismate biosynthesis; chorismate from D-erythrose 4-phosphate and phosphoenolpyruvate: step 3/7. It participates in metabolic intermediate biosynthesis; chorismate biosynthesis; chorismate from D-erythrose 4-phosphate and phosphoenolpyruvate: step 4/7. It functions in the pathway metabolic intermediate biosynthesis; chorismate biosynthesis; chorismate from D-erythrose 4-phosphate and phosphoenolpyruvate: step 5/7. The protein operates within metabolic intermediate biosynthesis; chorismate biosynthesis; chorismate from D-erythrose 4-phosphate and phosphoenolpyruvate: step 6/7. In terms of biological role, the AROM polypeptide catalyzes 5 consecutive enzymatic reactions in prechorismate polyaromatic amino acid biosynthesis. In Pyricularia oryzae (strain 70-15 / ATCC MYA-4617 / FGSC 8958) (Rice blast fungus), this protein is Pentafunctional AROM polypeptide.